The chain runs to 186 residues: MQNKQSNSIRTVVATGIGAAVIFVLMKFVAIPTGVPNTQVNVAMGFLALLGAIFGPVAAGLAVFIGHALNDFVTYGSPWWTWVIVDGLIGVAFGLAKNRLKIENGVLGTAKLVWFNIYQIIVNFIGWVLLAPTGDIIIYHEPANKVYLQGVITWIADSISVAIIGTILLVLYARTRTQRGSLTKER.

5 helical membrane-spanning segments follow: residues 12–32 (VVAT…VAIP), 45–65 (GFLA…AVFI), 76–96 (GSPW…FGLA), 112–132 (LVWF…LLAP), and 151–171 (VITW…LLVL).

This sequence belongs to the UPF0397 family.

Its subcellular location is the cell membrane. This chain is UPF0397 protein lp_0150, found in Lactiplantibacillus plantarum (strain ATCC BAA-793 / NCIMB 8826 / WCFS1) (Lactobacillus plantarum).